Reading from the N-terminus, the 126-residue chain is Glycine cleavage system H protein (126 aa).

In terms of domain architecture, Lipoyl-binding spans 22 to 104 (IAYVGITDYA…YGKGWLIKIK (83 aa)). Lysine 63 carries the N6-lipoyllysine modification.

It belongs to the GcvH family. In terms of assembly, the glycine cleavage system is composed of four proteins: P, T, L and H. The cofactor is (R)-lipoate.

The glycine cleavage system catalyzes the degradation of glycine. The H protein shuttles the methylamine group of glycine from the P protein to the T protein. The polypeptide is Glycine cleavage system H protein (Phocaeicola vulgatus (strain ATCC 8482 / DSM 1447 / JCM 5826 / CCUG 4940 / NBRC 14291 / NCTC 11154) (Bacteroides vulgatus)).